The following is a 204-amino-acid chain: Large ribosomal subunit protein uL4 (204 aa).

Over residues 42-55 (GSRQGSKAQKNRSA) the composition is skewed to polar residues. A disordered region spans residues 42–85 (GSRQGSKAQKNRSAVSGGGKRPWAQKGTGRARAGTTRGPIWRSG). Over residues 68 to 79 (GTGRARAGTTRG) the composition is skewed to low complexity.

The protein belongs to the universal ribosomal protein uL4 family. In terms of assembly, part of the 50S ribosomal subunit.

In terms of biological role, one of the primary rRNA binding proteins, this protein initially binds near the 5'-end of the 23S rRNA. It is important during the early stages of 50S assembly. It makes multiple contacts with different domains of the 23S rRNA in the assembled 50S subunit and ribosome. Functionally, forms part of the polypeptide exit tunnel. This chain is Large ribosomal subunit protein uL4, found in Vesicomyosocius okutanii subsp. Calyptogena okutanii (strain HA).